Consider the following 515-residue polypeptide: Sugar transport protein MST4 (515 aa).

The Cytoplasmic segment spans residues 1-17 (MAGGFSVSGSGVEFEAK). Residues 18–38 (ITPIVIISCIMAATGGLMFGY) traverse the membrane as a helical segment. Residues 39–78 (DVGISGGVTSMDDFLREFFPTVLKKKHEDKESNYCKYDNQ) lie on the Extracellular side of the membrane. A helical transmembrane segment spans residues 79–99 (GLQLFTSSLYLAGLTATFFAS). Over 100 to 108 (YTTRRLGRR) the chain is Cytoplasmic. Residues 109 to 129 (LTMLIAGVFFIVGVIFNGAAQ) form a helical membrane-spanning segment. Residues 130 to 138 (NLAMLIVGR) are Extracellular-facing. The helical transmembrane segment at 139–159 (ILLGCGVGFANQAVPLFLSEI) threads the bilayer. Topologically, residues 160-165 (APTRIR) are cytoplasmic. A helical membrane pass occupies residues 166-186 (GGLNILFQLNVTIGILFANLV). The Extracellular segment spans residues 187–199 (NYGTAKIHPWGWR). Residues 200-220 (LSLSLAGIPAALLTLGALFVV) form a helical membrane-spanning segment. The Cytoplasmic portion of the chain corresponds to 221 to 280 (DTPNSLIERGRLEEGKAVLRKIRGTDNVEPEFNEIVEASRVAQEVKHPFRNLLQRRNRPQ). Residues 281–301 (LVIAVLLQIFQQFTGINAIMF) form a helical membrane-spanning segment. Residues 302–315 (YAPVLFNTLGFKTD) are Extracellular-facing. The helical transmembrane segment at 316–336 (ASLYSAVITGAVNVLSTLVSV) threads the bilayer. The Cytoplasmic segment spans residues 337 to 347 (YSVDRVGRRML). A helical membrane pass occupies residues 348 to 368 (LLEAGVQMFLSQVAIAVVLGI). Residues 369-379 (KVTDRSDNLGH) are Extracellular-facing. The chain crosses the membrane as a helical span at residues 380 to 400 (GWAIMVVVMVCTFVSSFAWSW). Over 401–422 (GPLGWLIPSETFPLETRSAGQS) the chain is Cytoplasmic. The helical transmembrane segment at 423–443 (VTVCVNLLFTFVIAQAFLSML) threads the bilayer. The Extracellular portion of the chain corresponds to 444–448 (CHLKY). A helical transmembrane segment spans residues 449 to 469 (AIFAFFSAWVVVMSLFVLFFL). The Cytoplasmic segment spans residues 470–515 (PETKNIPIEEMTERVWKQHWFWKRFMDDADKHHVVPNGGKSNGATV).

The protein belongs to the major facilitator superfamily. Sugar transporter (TC 2.A.1.1) family. As to expression, expressed in roots, shoots, leaf blades, leaf sheaths, anthers, ovaries and embryos.

Its subcellular location is the membrane. Functionally, mediates active uptake of hexoses by sugar:proton symport. Can transport glucose, fructose, mannose and galactose. Can transport xylose and ribose. This Oryza sativa subsp. japonica (Rice) protein is Sugar transport protein MST4.